Here is a 502-residue protein sequence, read N- to C-terminus: MDEGIEKNIFVNLESQIDGVCPKFYVNVDDIDIIHEPPEFYQRLKKLIKKAQKRIFLSTLYIGKEERELINCLSNALSNNPSLHVHILADQLRCTRESPGCCSASLLMQLKKKFPDRCEIKLYHTPNLRGLRKQLVPHRFNEGWGLQHMKIYGADDNLIISGANLSRDYFTNRKDRYYLFSDKGLADFFFKTHFLFSQLSFECIPHLSDSSIQLSSTSPVIPFTLKWNNSCPNPLTNPQEFRVAASAKIQQLLQGNREKFLSRNPSKPLSSVYGSELINQAGDDNNKPFHKYEESAIVYPLFQCVPILTSDVHSTEEKVLSIIGTLLSRKEVNWTLTAGYFNVYPALRKQLLKSEGIGEVIVASQQANGFYRSPGPSKLIPPAYQYIAEQFLKDSRKKKRNIDVLQWQNKGNTYHAKGFWLSTQHHKHPFLTTIGSSNYTSRSQQLDLESTLVVMTQNEKLKRKFSTEIELIKQHTKPMNTCQLEKVPMYVKALTSLMKKKL.

58–65 (STLYIGKE) provides a ligand contact to ATP. PLD phosphodiesterase domains follow at residues 143–169 (GWGLQHMKIYGADDNLIISGANLSRDY) and 410–443 (KGNTYHAKGFWLSTQHHKHPFLTTIGSSNYTSRS). Active-site residues include His148, Lys150, and Asp155.

Belongs to the CDP-alcohol phosphatidyltransferase class-II family.

The protein resides in the mitochondrion. It carries out the reaction a CDP-1,2-diacyl-sn-glycerol + sn-glycerol 3-phosphate = a 1,2-diacyl-sn-glycero-3-phospho-(1'-sn-glycero-3'-phosphate) + CMP + H(+). The protein operates within phospholipid metabolism; phosphatidylglycerol biosynthesis; phosphatidylglycerol from CDP-diacylglycerol: step 1/2. In terms of biological role, functions in the biosynthesis of the anionic phospholipids phosphatidylglycerol and cardiolipin. The sequence is that of CDP-diacylglycerol--glycerol-3-phosphate 3-phosphatidyltransferase (pgs1) from Schizosaccharomyces pombe (strain 972 / ATCC 24843) (Fission yeast).